The sequence spans 860 residues: MSSRFFHGGSDSESSSSDEEELYSDRDEEEVSDEEEETTSEEESSEEESDDEAGLTGAKQYLRGAADLDESDEEEDRVTIVKSAKDKRLEELEGTMKLIENAEKINDWAVISTEFDKLNRQVAKIIQAGPTPKIYIKAIADLEDFVNETVVKQKTTTKKMNASNAKGFNTVKQRIKKNNKDYTAEIEKYRENKDEYLEEEEEQETVIVEKKARTIRIEDTLAQSDEGFSTVGRGGRTLQYTPESILKHLRVIVESRGKKNTDRIEQIKVMEKLLEVASSPYHTIRILLTLISTRFDLATSSLSNYMSTEQWKLAENEISTLISTLEEHPQFVVTEGAEEWEDDEKLPQVAPGEVLKVPGSVVSFVERLDDELIRSLQHIDPHTAEYIERLGDEQLLYNNIVRVLLYVEGLNQVEKSEPRQDSVNRVLMRRLEHLYFKPSQVVTILEDNTWKDLPEKLSSSITPRDMKSDVSLLVQTICNYLFQYSDGIIRARAMLCQIYFLALHDKYHRARDLMLMSHLTENISNFDVSTQILFNRTLVQIGLCAFRAGLIYEAQNTLSEVCGSGRQKELLAQGIILQRYSSVSPEQEKLERQRQLPFHMHINLELLECIYLTSSMFLEVPLMAQTSSSPEMKRRIISKTFRRMLDYNERQVFTGPPENTRDGVIMSAKFLAAGDWKKASETLNSIKIWDLMAQPDKIKAMLAQQIQEEGLRTYLFTYAPFYDTLSITTLSNMFDLTEKKISAIISRMISHEELAAALDQVNNAIVFRKGVELSRLQSQIVTLADKSMSLLEANEKTLEQRTQGMANAFQRDQGPGGRLGRGQGRGGQRTAGGRPPIGGQQRRPGGQQFSGGALGGAIKA.

Residues 1–79 (MSSRFFHGGS…ESDEEEDRVT (79 aa)) are disordered. Composition is skewed to acidic residues over residues 16–53 (SSDEEELYSDRDEEEVSDEEEETTSEEESSEEESDDEA) and 67–76 (DLDESDEEED). Residues 598–772 (FHMHINLELL…NAIVFRKGVE (175 aa)) form the PCI domain. The segment at 808-860 (AFQRDQGPGGRLGRGQGRGGQRTAGGRPPIGGQQRRPGGQQFSGGALGGAIKA) is disordered. Over residues 814–830 (GPGGRLGRGQGRGGQRT) the composition is skewed to gly residues. Over residues 831–847 (AGGRPPIGGQQRRPGGQ) the composition is skewed to low complexity. Residues 848-860 (QFSGGALGGAIKA) are compositionally biased toward gly residues.

Belongs to the eIF-3 subunit C family. In terms of assembly, component of the eukaryotic translation initiation factor 3 (eIF-3) complex.

It is found in the cytoplasm. In terms of biological role, component of the eukaryotic translation initiation factor 3 (eIF-3) complex, which is involved in protein synthesis of a specialized repertoire of mRNAs and, together with other initiation factors, stimulates binding of mRNA and methionyl-tRNAi to the 40S ribosome. The eIF-3 complex specifically targets and initiates translation of a subset of mRNAs involved in cell proliferation. This is Eukaryotic translation initiation factor 3 subunit C from Coccidioides immitis (strain RS) (Valley fever fungus).